The sequence spans 153 residues: Large ribosomal subunit protein uL30 (153 aa).

The protein belongs to the universal ribosomal protein uL30 family. Part of the 50S ribosomal subunit.

This is Large ribosomal subunit protein uL30 from Methanocorpusculum labreanum (strain ATCC 43576 / DSM 4855 / Z).